The primary structure comprises 284 residues: ATP phosphoribosyltransferase (284 aa).

It belongs to the ATP phosphoribosyltransferase family. Long subfamily. In terms of assembly, equilibrium between an active dimeric form, an inactive hexameric form and higher aggregates. Interconversion between the various forms is largely reversible and is influenced by the natural substrates and inhibitors of the enzyme. The cofactor is Mg(2+).

It is found in the cytoplasm. It catalyses the reaction 1-(5-phospho-beta-D-ribosyl)-ATP + diphosphate = 5-phospho-alpha-D-ribose 1-diphosphate + ATP. The protein operates within amino-acid biosynthesis; L-histidine biosynthesis; L-histidine from 5-phospho-alpha-D-ribose 1-diphosphate: step 1/9. With respect to regulation, feedback inhibited by histidine. Catalyzes the condensation of ATP and 5-phosphoribose 1-diphosphate to form N'-(5'-phosphoribosyl)-ATP (PR-ATP). Has a crucial role in the pathway because the rate of histidine biosynthesis seems to be controlled primarily by regulation of HisG enzymatic activity. The polypeptide is ATP phosphoribosyltransferase (Mycobacterium avium (strain 104)).